Reading from the N-terminus, the 1052-residue chain is RTX-III toxin determinant A from serotype 8 (1052 aa).

The next 3 helical transmembrane spans lie at 248-265, 275-334, and 372-418; these read GLDIISSLLSGVTASFAL, KVAA…LRVA, and DASI…GILE. 6 Hemolysin-type calcium-binding repeats span residues 744-761, 762-779, 780-797, 798-815, 826-843, and 844-861; these read KGSKFRDIFHGADGDDLL, NGNDGDDILYGDKGNDEL, RGDNGNDQLYGGEGNDKL, LGGNGNNYLSGGDGNDEL, RGGKGDDKLYGSSGSDLL, and DGGEGNDYLEGGDGSDFY.

The protein belongs to the RTX prokaryotic toxin (TC 1.C.11) family. Palmitoylated by ApxIIIC. The toxin only becomes active when modified.

It localises to the secreted. Its subcellular location is the host cell membrane. Functionally, does not have hemolytic activity but shows a strong cytotoxicity towards alveolar macrophages and neutrophils. The protein is RTX-III toxin determinant A from serotype 8 (apxIIIA) of Actinobacillus pleuropneumoniae (Haemophilus pleuropneumoniae).